A 638-amino-acid chain; its full sequence is Threonine--tRNA ligase (638 aa).

Positions 1 to 61 (MPKITLPDGT…KNDSKVVIIT (61 aa)) constitute a TGS domain. The interval 242-533 (DHRKLGKKHS…LIEQYEAKFP (292 aa)) is catalytic. Cys333, His384, and His510 together coordinate Zn(2+).

The protein belongs to the class-II aminoacyl-tRNA synthetase family. As to quaternary structure, homodimer. Requires Zn(2+) as cofactor.

The protein localises to the cytoplasm. It catalyses the reaction tRNA(Thr) + L-threonine + ATP = L-threonyl-tRNA(Thr) + AMP + diphosphate + H(+). Catalyzes the attachment of threonine to tRNA(Thr) in a two-step reaction: L-threonine is first activated by ATP to form Thr-AMP and then transferred to the acceptor end of tRNA(Thr). Also edits incorrectly charged L-seryl-tRNA(Thr). This is Threonine--tRNA ligase from Prochlorococcus marinus (strain MIT 9515).